We begin with the raw amino-acid sequence, 294 residues long: Urease accessory protein UreD (294 aa).

A disordered region spans residues 1-22 (MSVEKPVAAGRQNSKATGRHKG).

Belongs to the UreD family. In terms of assembly, ureD, UreF and UreG form a complex that acts as a GTP-hydrolysis-dependent molecular chaperone, activating the urease apoprotein by helping to assemble the nickel containing metallocenter of UreC. The UreE protein probably delivers the nickel.

The protein resides in the cytoplasm. In terms of biological role, required for maturation of urease via the functional incorporation of the urease nickel metallocenter. The chain is Urease accessory protein UreD from Alcanivorax borkumensis (strain ATCC 700651 / DSM 11573 / NCIMB 13689 / SK2).